The chain runs to 343 residues: Anthranilate phosphoribosyltransferase (343 aa).

5-phospho-alpha-D-ribose 1-diphosphate-binding positions include glycine 78, 81–82 (GD), threonine 86, 88–91 (NIST), 106–114 (KHGNRSVSS), and serine 118. Position 78 (glycine 78) interacts with anthranilate. Serine 90 provides a ligand contact to Mg(2+). Residue asparagine 109 participates in anthranilate binding. Arginine 164 is a binding site for anthranilate. Positions 223 and 224 each coordinate Mg(2+).

It belongs to the anthranilate phosphoribosyltransferase family. In terms of assembly, homodimer. It depends on Mg(2+) as a cofactor.

The enzyme catalyses N-(5-phospho-beta-D-ribosyl)anthranilate + diphosphate = 5-phospho-alpha-D-ribose 1-diphosphate + anthranilate. The protein operates within amino-acid biosynthesis; L-tryptophan biosynthesis; L-tryptophan from chorismate: step 2/5. Its function is as follows. Catalyzes the transfer of the phosphoribosyl group of 5-phosphorylribose-1-pyrophosphate (PRPP) to anthranilate to yield N-(5'-phosphoribosyl)-anthranilate (PRA). In Chlamydia felis (strain Fe/C-56) (Chlamydophila felis), this protein is Anthranilate phosphoribosyltransferase.